A 481-amino-acid polypeptide reads, in one-letter code: UDP-N-acetylmuramoyl-L-alanyl-D-glutamate--L-lysine ligase (481 aa).

S42 provides a ligand contact to UDP-N-acetyl-alpha-D-muramoyl-L-alanyl-D-glutamate. 118-124 (GTKGKTT) provides a ligand contact to ATP. Residues 160–161 (TT), S187, and R195 contribute to the UDP-N-acetyl-alpha-D-muramoyl-L-alanyl-D-glutamate site. At K229 the chain carries N6-carboxylysine. The L-lysine recognition motif signature appears at 404-407 (DDPN).

It belongs to the MurCDEF family. MurE subfamily. Post-translationally, carboxylation is probably crucial for Mg(2+) binding and, consequently, for the gamma-phosphate positioning of ATP.

Its subcellular location is the cytoplasm. The enzyme catalyses UDP-N-acetyl-alpha-D-muramoyl-L-alanyl-D-glutamate + L-lysine + ATP = UDP-N-acetyl-alpha-D-muramoyl-L-alanyl-gamma-D-glutamyl-L-lysine + ADP + phosphate + H(+). It participates in cell wall biogenesis; peptidoglycan biosynthesis. Functionally, catalyzes the addition of L-lysine to the nucleotide precursor UDP-N-acetylmuramoyl-L-alanyl-D-glutamate (UMAG) in the biosynthesis of bacterial cell-wall peptidoglycan. The chain is UDP-N-acetylmuramoyl-L-alanyl-D-glutamate--L-lysine ligase from Streptococcus pneumoniae (strain ATCC BAA-255 / R6).